A 103-amino-acid polypeptide reads, in one-letter code: NADH-quinone oxidoreductase subunit K (103 aa).

The next 3 membrane-spanning stretches (helical) occupy residues 4-24 (LTSYAFVSMMLFSIGAIGVIA), 28-48 (IFVIYMSIEMMLNGINLFLIT), and 64-84 (MVISIAAAEAAIFLSVIILLF).

It belongs to the complex I subunit 4L family. NDH-1 is composed of 14 different subunits. Subunits NuoA, H, J, K, L, M, N constitute the membrane sector of the complex.

It is found in the cell inner membrane. The enzyme catalyses a quinone + NADH + 5 H(+)(in) = a quinol + NAD(+) + 4 H(+)(out). Its function is as follows. NDH-1 shuttles electrons from NADH, via FMN and iron-sulfur (Fe-S) centers, to quinones in the respiratory chain. The immediate electron acceptor for the enzyme in this species is believed to be ubiquinone. Couples the redox reaction to proton translocation (for every two electrons transferred, four hydrogen ions are translocated across the cytoplasmic membrane), and thus conserves the redox energy in a proton gradient. In Aliarcobacter butzleri (strain RM4018) (Arcobacter butzleri), this protein is NADH-quinone oxidoreductase subunit K.